The sequence spans 282 residues: Pantothenate synthetase (282 aa).

30–37 (MGYFHEGH) lines the ATP pocket. The active-site Proton donor is the histidine 37. (R)-pantoate is bound at residue glutamine 61. A beta-alanine-binding site is contributed by glutamine 61. 147–150 (GQKD) provides a ligand contact to ATP. Glutamine 153 serves as a coordination point for (R)-pantoate. ATP contacts are provided by residues valine 176 and 184-187 (LSSR).

The protein belongs to the pantothenate synthetase family. In terms of assembly, homodimer.

The protein localises to the cytoplasm. The catalysed reaction is (R)-pantoate + beta-alanine + ATP = (R)-pantothenate + AMP + diphosphate + H(+). It functions in the pathway cofactor biosynthesis; (R)-pantothenate biosynthesis; (R)-pantothenate from (R)-pantoate and beta-alanine: step 1/1. In terms of biological role, catalyzes the condensation of pantoate with beta-alanine in an ATP-dependent reaction via a pantoyl-adenylate intermediate. This is Pantothenate synthetase from Maridesulfovibrio salexigens (strain ATCC 14822 / DSM 2638 / NCIMB 8403 / VKM B-1763) (Desulfovibrio salexigens).